We begin with the raw amino-acid sequence, 206 residues long: Protein Mabiki (206 aa).

Positions 54–77 (FSDQDADFPPLPKRRRLGSSSSSV) are disordered.

In terms of biological role, plays a role in inducing apoptosis and is involved in the repair of head patterning defects in the embryo caused by extra maternal copies of the homeotic gene bicoid. The protein is Protein Mabiki of Drosophila melanogaster (Fruit fly).